Consider the following 453-residue polypeptide: Cytochrome b-c1 complex subunit 2, mitochondrial (453 aa).

A mitochondrion-targeting transit peptide spans methionine 1–tyrosine 14. Lysine 66, lysine 199, and lysine 250 each carry N6-acetyllysine. Serine 368 carries the post-translational modification Phosphoserine.

This sequence belongs to the peptidase M16 family. UQCRC2/QCR2 subfamily. In terms of assembly, component of the ubiquinol-cytochrome c oxidoreductase (cytochrome b-c1 complex, complex III, CIII), a multisubunit enzyme composed of 11 subunits. The complex is composed of 3 respiratory subunits cytochrome b, cytochrome c1 and Rieske protein UQCRFS1, 2 core protein subunits UQCRC1/QCR1 and UQCRC2/QCR2, and 6 low-molecular weight protein subunits UQCRH/QCR6, UQCRB/QCR7, UQCRQ/QCR8, UQCR10/QCR9, UQCR11/QCR10 and subunit 9, the cleavage product of Rieske protein UQCRFS1. The complex exists as an obligatory dimer and forms supercomplexes (SCs) in the inner mitochondrial membrane with NADH-ubiquinone oxidoreductase (complex I, CI) and cytochrome c oxidase (complex IV, CIV), resulting in different assemblies (supercomplex SCI(1)III(2)IV(1) and megacomplex MCI(2)III(2)IV(2)). Interacts with RAB5IF. Interacts with STMP1. Acetylation of Lys-159 and Lys-250 is observed in liver mitochondria from fasted mice but not from fed mice. Expressed in neurons and astrocytes of the cerebral cortex and hippocampus (at protein level).

The protein resides in the mitochondrion inner membrane. Component of the ubiquinol-cytochrome c oxidoreductase, a multisubunit transmembrane complex that is part of the mitochondrial electron transport chain which drives oxidative phosphorylation. The respiratory chain contains 3 multisubunit complexes succinate dehydrogenase (complex II, CII), ubiquinol-cytochrome c oxidoreductase (cytochrome b-c1 complex, complex III, CIII) and cytochrome c oxidase (complex IV, CIV), that cooperate to transfer electrons derived from NADH and succinate to molecular oxygen, creating an electrochemical gradient over the inner membrane that drives transmembrane transport and the ATP synthase. The cytochrome b-c1 complex catalyzes electron transfer from ubiquinol to cytochrome c, linking this redox reaction to translocation of protons across the mitochondrial inner membrane, with protons being carried across the membrane as hydrogens on the quinol. In the process called Q cycle, 2 protons are consumed from the matrix, 4 protons are released into the intermembrane space and 2 electrons are passed to cytochrome c. The 2 core subunits UQCRC1/QCR1 and UQCRC2/QCR2 are homologous to the 2 mitochondrial-processing peptidase (MPP) subunits beta-MPP and alpha-MPP respectively, and they seem to have preserved their MPP processing properties. May be involved in the in situ processing of UQCRFS1 into the mature Rieske protein and its mitochondrial targeting sequence (MTS)/subunit 9 when incorporated into complex III. The chain is Cytochrome b-c1 complex subunit 2, mitochondrial (Uqcrc2) from Mus musculus (Mouse).